Here is a 419-residue protein sequence, read N- to C-terminus: Metacaspase-1A (419 aa).

The disordered stretch occupies residues 1–89 (MHHQQSSYGG…PPDQPVSFGQ (89 aa)). A compositionally biased stretch (polar residues) spans 41-51 (NGYNSPQQNYG). Over residues 59–71 (YQQQSAYQNSYNQ) the composition is skewed to low complexity. Catalysis depends on residues His190 and Cys246.

It belongs to the peptidase C14B family.

In terms of biological role, involved in cell death (apoptosis). The sequence is that of Metacaspase-1A (casA) from Aspergillus oryzae (strain ATCC 42149 / RIB 40) (Yellow koji mold).